A 138-amino-acid polypeptide reads, in one-letter code: Small ribosomal subunit protein uS11c (138 aa).

This sequence belongs to the universal ribosomal protein uS11 family. Part of the 30S ribosomal subunit.

The protein localises to the plastid. Its subcellular location is the chloroplast. This Phalaenopsis aphrodite subsp. formosana (Moth orchid) protein is Small ribosomal subunit protein uS11c.